The sequence spans 60 residues: Cytotoxin 1 (60 aa).

4 cysteine pairs are disulfide-bonded: Cys3/Cys21, Cys14/Cys38, Cys42/Cys53, and Cys54/Cys59.

It belongs to the three-finger toxin family. Short-chain subfamily. Type IA cytotoxin sub-subfamily. In terms of assembly, monomer, or heterodimer with alpha-cobratoxin (AC P01391); disulfide-linked. Expressed by the venom gland.

The protein resides in the secreted. Its subcellular location is the target cell membrane. Monomer: shows cytolytic activity (apoptosis is induced in C2C12 cells, but no cytotoxicity is observed on INS-1E). In addition, this toxin shows insulinotropic activity that may be mediated by the modulation of potassium channels (Kv). It induces the increase of intracellular calcium release. It induces insulin secretion from rat INS-1E cells in absence and in presence of glucose, without affecting cell viability and integrity. In presence of glucose, the insulinotropic activity is increased, suggesting a possible synergistic effect with glucose. Its insulinotropic activity does not involve GLP-1R signaling. Its function is as follows. Heterodimer: has no cytolytic activity, but retains most of the alpha-cobratoxin capacity to compete with alpha-bungarotoxin for binding to Torpedo and alpha-7/CHRNA7 nicotinic acetylcholine receptors (nAChRs) as well as to Lymnea stagnalis acetylcholine-binding protein. The sequence is that of Cytotoxin 1 from Naja kaouthia (Monocled cobra).